Reading from the N-terminus, the 308-residue chain is UDP-N-acetylenolpyruvoylglucosamine reductase (308 aa).

The 165-residue stretch at 32 to 196 folds into the FAD-binding PCMH-type domain; it reads VGGPAARLYK…ISAKLQLSPG (165 aa). Arg-176 is a catalytic residue. Ser-225 serves as the catalytic Proton donor. The active site involves Glu-296.

This sequence belongs to the MurB family. FAD is required as a cofactor.

Its subcellular location is the cytoplasm. It carries out the reaction UDP-N-acetyl-alpha-D-muramate + NADP(+) = UDP-N-acetyl-3-O-(1-carboxyvinyl)-alpha-D-glucosamine + NADPH + H(+). It functions in the pathway cell wall biogenesis; peptidoglycan biosynthesis. In terms of biological role, cell wall formation. The chain is UDP-N-acetylenolpyruvoylglucosamine reductase from Legionella pneumophila (strain Lens).